A 195-amino-acid polypeptide reads, in one-letter code: UPF0167 protein CbrC (195 aa).

It belongs to the UPF0167 family.

The polypeptide is UPF0167 protein CbrC (cbrC) (Escherichia coli (strain K12)).